A 1078-amino-acid polypeptide reads, in one-letter code: MTLDDNPVPPTLPYTLHGVFQQNVLDRPDASAVCAWDGDLTYRELDEKSSTLAHILRHRGVQDGALVALCFDHSLWTAVAMMAVSKAGGVWFFLEPKHPVNRLRQMCRSVQARMVLCSRSQASVAAELSDDQMEAPLSIEEAVLREEDPGPMDLEVVSPERPAYVAFTSGSTGSPKGAVMTHQAAVTGVLHNAKPMQLDRTARILQFASFAFDISFLEHFWALLLGGCLCIPAPLDRQNNTIHAVQSLQVNWMFLTPTVARLLEPPQLPSLRTLVLGGEPVTQADLDMWLPYVHLAGLYGPAECAVGIAVQPDYSRVESANNVGPPFSVACWIVSEQDPTQLAPRGAVGELVVEGPSISEGYINAPEQTTRAYLTNPTWLPAARHSTKKLYRTGDLARVLDDGSLLFHGRKDTQVKINGQRIELGEIEYHTRAVLGKEHLRSPPVVAEAMEVRGRALTVIAFYQVEGVCQDLDHDGQDLFLPPDDGFVGRKQSYQSQLRDHLPEYMIPTSFIPVRGLPLTMSGKTDRKTLREKFAQLPSDRIKAYFVDGDGGSRSTEGMPTTPLERQMQELWAATLKLELEEVGRNDPWMSLGGESLAAMRLVARARKEGIAVTVPDIFRHKTIATLCQHVSVRPGPETIESFPPFSLVQCQQGSTGIEELRHAAAQQCGLTPEAIEDLYPFTAMQEAVVIPPATIGVNYTLRLDVKLPAELDLEQLMRAWDMVVAANSVLRMRVVRLPADESETMVLAVTRPEIPMEPLFAERFAPGVDLWGLGKPLVRVGVAPGRLVMLIQHALYDGHSLGLIFRDLEQAYRGQPVAAVSYSPFVHWSTEWQDGSNKQQYWREKFAGFDGRVCPPRVADAGIGCMESQHFWGSLNFRPDGFTVTSKIRVALAVVLSWHFDTCDIVLGGIYARRGAPIPGIMESPVPASAILPDRIRLDPTQSLRANVDQDQENILTMMPYEGIRPSQVLDLSEAARAASQFQTILAVQQDNSSVYPEMFRDHEMGYYGPVTAHNLMMQCFLSPDRASARVSLRLSERTMQETTAWDRFLAHFEAVVDAIQEKPEIPVDRLRQHLGA.

The segment at 20-417 (FQQNVLDRPD…HGRKDTQVKI (398 aa)) is adenylation. The region spanning 559 to 635 (MPTTPLERQM…TLCQHVSVRP (77 aa)) is the Carrier domain. The residue at position 596 (Ser-596) is an O-(pantetheine 4'-phosphoryl)serine. The tract at residues 699 to 1013 (NYTLRLDVKL…HEMGYYGPVT (315 aa)) is condensation.

This sequence belongs to the NRP synthetase family.

The enzyme catalyses holo-[peptidyl-carrier protein] + L-proline + ATP = L-prolyl-[peptidyl-carrier protein] + AMP + diphosphate. Its pathway is secondary metabolite biosynthesis. Functionally, nonribosomal peptide synthetase; part of the gene cluster that mediates the biosynthesis of aculenes, a unique type of norsesquiterpenes that contain a nordaucane skeleton linked to an L-proline moiety and are of mixed biosynthetic origin. The pathway begins with the synthesis of dauca-4,7-diene by the terpene cyclase aneC using farnesyl pyrophosphate (FPP) as substrate. The cytochrome P450 monooxygenase aneF then performs the initial oxidation at C-12 of dauca-4,7-diene to yield asperaculane D. Asperaculane D is substrate of the cytochrome P450 monooxygenase aneD for C-10 hydroxylation to yield asperaculane E. The cytochrome P450 monooxygenase aneG then converts asperaculane E into aculene D via C-2 oxidation. The monomodular nonribosomal peptide synthase aneB adenylates L-proline and the thiohydrolase aneE transfers this activated L-proline derivative to aculenes D and C to produce respectively aculenes B and A. The dioxygenase aneA converts aculene D into aculene C, and aculene B into aculene A by introducing the 5,6-alkene moiety. Asperculanes A, B, C and F, as well as 14-prolyl asperculane C, might be shunt products of the pathway. This is Nonribosomal peptide synthetase aneB from Aspergillus aculeatus (strain ATCC 16872 / CBS 172.66 / WB 5094).